Here is a 452-residue protein sequence, read N- to C-terminus: Friend leukemia integration 1 transcription factor (452 aa).

Ser39 carries the post-translational modification Phosphoserine. Residues 112-198 enclose the PNT domain; the sequence is PPPPNMTTNE…SHLSYLRESS (87 aa). Residues 209 to 271 form a disordered region; the sequence is DQSSRLSVKE…PYQILGPTSS (63 aa). Over residues 215–226 the composition is skewed to basic and acidic residues; sequence SVKEDPSYDSVR. Residues 248–257 are compositionally biased toward polar residues; that stretch reads QTISKNTEQR. The ETS DNA-binding region spans 281–361; sequence IQLWQFLLEL…HGKRYAYKFD (81 aa). The interval 433 to 452 is disordered; it reads NPNVPRHPNTHVPSHLGSYY.

It belongs to the ETS family. In terms of assembly, can form homodimers or heterodimers with ETV6/TEL1.

The protein resides in the nucleus. Functionally, sequence-specific transcriptional activator. Recognizes the DNA sequence 5'-C[CA]GGAAGT-3'. The protein is Friend leukemia integration 1 transcription factor (FLI1) of Homo sapiens (Human).